Here is a 369-residue protein sequence, read N- to C-terminus: Protein RecA (369 aa).

An ATP-binding site is contributed by 77–84 (GPESSGKT).

It belongs to the RecA family.

It localises to the cytoplasm. In terms of biological role, can catalyze the hydrolysis of ATP in the presence of single-stranded DNA, the ATP-dependent uptake of single-stranded DNA by duplex DNA, and the ATP-dependent hybridization of homologous single-stranded DNAs. It interacts with LexA causing its activation and leading to its autocatalytic cleavage. This Corynebacterium pseudotuberculosis (strain C231) protein is Protein RecA.